Here is a 657-residue protein sequence, read N- to C-terminus: Translation factor GUF1, mitochondrial (657 aa).

A mitochondrion-targeting transit peptide spans methionine 1–asparagine 39. One can recognise a tr-type G domain in the interval glutamate 59–valine 239. GTP is bound by residues alanine 68–serine 75, aspartate 132–histidine 136, and asparagine 186–aspartate 189.

The protein belongs to the TRAFAC class translation factor GTPase superfamily. Classic translation factor GTPase family. LepA subfamily.

The protein resides in the mitochondrion inner membrane. The enzyme catalyses GTP + H2O = GDP + phosphate + H(+). Its function is as follows. Promotes mitochondrial protein synthesis. May act as a fidelity factor of the translation reaction, by catalyzing a one-codon backward translocation of tRNAs on improperly translocated ribosomes. Binds to mitochondrial ribosomes in a GTP-dependent manner. This Ajellomyces capsulatus (strain G186AR / H82 / ATCC MYA-2454 / RMSCC 2432) (Darling's disease fungus) protein is Translation factor GUF1, mitochondrial.